The primary structure comprises 183 residues: UPF0340 protein LCA_1354 (183 aa).

It belongs to the UPF0340 family.

In Latilactobacillus sakei subsp. sakei (strain 23K) (Lactobacillus sakei subsp. sakei), this protein is UPF0340 protein LCA_1354.